Reading from the N-terminus, the 263-residue chain is Uroporphyrinogen-III C-methyltransferase (263 aa).

Residues P20, 96 to 98 (GGD), 126 to 127 (TA), M180, and A237 each bind S-adenosyl-L-homocysteine.

This sequence belongs to the precorrin methyltransferase family.

The enzyme catalyses uroporphyrinogen III + 2 S-adenosyl-L-methionine = precorrin-2 + 2 S-adenosyl-L-homocysteine + H(+). It participates in cofactor biosynthesis; adenosylcobalamin biosynthesis; precorrin-2 from uroporphyrinogen III: step 1/1. The protein operates within porphyrin-containing compound metabolism; siroheme biosynthesis; precorrin-2 from uroporphyrinogen III: step 1/1. Functionally, catalyzes the two successive C-2 and C-7 methylation reactions involved in the conversion of uroporphyrinogen III to precorrin-2 via the intermediate formation of precorrin-1. It is a step in the biosynthesis of both cobalamin (vitamin B12) and siroheme. This chain is Uroporphyrinogen-III C-methyltransferase (cobA), found in Synechocystis sp. (strain ATCC 27184 / PCC 6803 / Kazusa).